A 361-amino-acid chain; its full sequence is Beta-hexosaminidase (361 aa).

Substrate-binding positions include aspartate 69, arginine 77, arginine 144, and 174-175; that span reads KH. The active-site Proton donor/acceptor is the histidine 187. Aspartate 258 serves as the catalytic Nucleophile.

Belongs to the glycosyl hydrolase 3 family. NagZ subfamily.

The protein resides in the cytoplasm. It catalyses the reaction Hydrolysis of terminal non-reducing N-acetyl-D-hexosamine residues in N-acetyl-beta-D-hexosaminides.. The protein operates within cell wall biogenesis; peptidoglycan recycling. Functionally, plays a role in peptidoglycan recycling by cleaving the terminal beta-1,4-linked N-acetylglucosamine (GlcNAc) from peptide-linked peptidoglycan fragments, giving rise to free GlcNAc, anhydro-N-acetylmuramic acid and anhydro-N-acetylmuramic acid-linked peptides. The protein is Beta-hexosaminidase of Neisseria gonorrhoeae (strain NCCP11945).